Consider the following 565-residue polypeptide: Phosphoenolpyruvate-protein phosphotransferase (565 aa).

The active-site Tele-phosphohistidine intermediate is the histidine 191. Phosphoenolpyruvate is bound by residues arginine 289 and arginine 325. Mg(2+)-binding residues include glutamate 427 and aspartate 451. Residues 450-451 (ND) and arginine 461 each bind phosphoenolpyruvate. Cysteine 498 functions as the Proton donor in the catalytic mechanism.

This sequence belongs to the PEP-utilizing enzyme family. In terms of assembly, homodimer. The cofactor is Mg(2+).

Its subcellular location is the cytoplasm. It carries out the reaction L-histidyl-[protein] + phosphoenolpyruvate = N(pros)-phospho-L-histidyl-[protein] + pyruvate. Its function is as follows. General (non sugar-specific) component of the phosphoenolpyruvate-dependent sugar phosphotransferase system (sugar PTS). This major carbohydrate active-transport system catalyzes the phosphorylation of incoming sugar substrates concomitantly with their translocation across the cell membrane. Enzyme I transfers the phosphoryl group from phosphoenolpyruvate (PEP) to the phosphoryl carrier protein (HPr). The sequence is that of Phosphoenolpyruvate-protein phosphotransferase (ptsI) from Haloferax volcanii (strain ATCC 29605 / DSM 3757 / JCM 8879 / NBRC 14742 / NCIMB 2012 / VKM B-1768 / DS2) (Halobacterium volcanii).